A 219-amino-acid polypeptide reads, in one-letter code: Transmembrane protein 17B (219 aa).

Residue N26 is glycosylated (N-linked (GlcNAc...) asparagine). The next 4 helical transmembrane spans lie at 51–71 (MMLYFNAFFFPFWIISEIITM), 84–104 (ILLTTSLVILTLVESLRLYIG), 116–136 (LAGFLILTLLIQLPLLLFLLT), and 147–167 (LAVHMIYLMFINAEIVISFLV). Residues N195 and N203 are each glycosylated (N-linked (GlcNAc...) asparagine).

It belongs to the TMEM17 family. In terms of assembly, part of the tectonic-like complex (also named B9 complex).

The protein localises to the cell projection. Its subcellular location is the cilium membrane. In terms of biological role, transmembrane component of the tectonic-like complex, a complex localized at the transition zone of primary cilia and acting as a barrier that prevents diffusion of transmembrane proteins between the cilia and plasma membranes. Required for ciliogenesis and sonic hedgehog/SHH signaling. This Xenopus tropicalis (Western clawed frog) protein is Transmembrane protein 17B (Tmem17-b).